Here is a 467-residue protein sequence, read N- to C-terminus: ATP synthase subunit beta (467 aa).

152-159 (GGAGVGKT) contacts ATP.

The protein belongs to the ATPase alpha/beta chains family. As to quaternary structure, F-type ATPases have 2 components, CF(1) - the catalytic core - and CF(0) - the membrane proton channel. CF(1) has five subunits: alpha(3), beta(3), gamma(1), delta(1), epsilon(1). CF(0) has three main subunits: a(1), b(2) and c(9-12). The alpha and beta chains form an alternating ring which encloses part of the gamma chain. CF(1) is attached to CF(0) by a central stalk formed by the gamma and epsilon chains, while a peripheral stalk is formed by the delta and b chains.

The protein localises to the cell membrane. The enzyme catalyses ATP + H2O + 4 H(+)(in) = ADP + phosphate + 5 H(+)(out). Its function is as follows. Produces ATP from ADP in the presence of a proton gradient across the membrane. The catalytic sites are hosted primarily by the beta subunits. In Caldicellulosiruptor saccharolyticus (strain ATCC 43494 / DSM 8903 / Tp8T 6331), this protein is ATP synthase subunit beta.